A 224-amino-acid chain; its full sequence is MAITDWPVHERPREKLLQRGPNALSDAELLAIFLRTGVAGKTAVDLARELLESFGSLRALLEADLKQFCHAPGLGIAKYTQLQACLEMGRRHLEDTLKRGDVLTDPQTTQRYLVARLRAYPFEVFSCLFLDNRHRVLAFEELFRGTIDGASVHPREVLKRALAHNAAAVILAHNHPSGVAEPSRADECITQRLKEALALVDIRVLDHIIVGDGETLSFAERGLL.

Positions 102 to 224 (VLTDPQTTQR…TLSFAERGLL (123 aa)) constitute an MPN domain. Zn(2+)-binding residues include His173, His175, and Asp186. The JAMM motif signature appears at 173-186 (HNHPSGVAEPSRAD).

This sequence belongs to the UPF0758 family.

The chain is UPF0758 protein Noc_0236 from Nitrosococcus oceani (strain ATCC 19707 / BCRC 17464 / JCM 30415 / NCIMB 11848 / C-107).